The following is a 592-amino-acid chain: MSKPEFSTLIDLLQYRSHYQSARKAYSFLQNGEKEVNSLSYKELDEKARAIAVELQKQVDRNERALLLYPQGLEFIAALFGCLYAGVVAIPAPPPDPIRLKRTLPRLEAILFDAQASVILTDFSKYSQLKESTSELSSEFKRIKWIVSDKIPTALSQKWQKPDINSDTLAYLQYTSGSTSTPKGVMLTHKNLIHHCSYIKEAWGYTSDSIATTWVPHFHDYGLVDGLIQPLYSGIPCYVMSPIAFYMRPIRWLQTISRYRVTHSQGPNFAYEHCLRRTTAEQRANLDLSSWRTASNGAEPVRQETVENFIATFEPFGFRRDALYPAYGLAEATLLVSTKKHGEKARVLTLAAEALEKNRIVVVSPAEKEQVVRFVVSCGPPIGGMKVAIVNPFTLRKCQPDQVGEIWVCDPSMAVGYWNRLEETKKTFHANLAESGEGPFMRTGDLGFLKDGELFITGRIKDVIIIRGRNHYPQDIELTVEKSHPSLRSSHGAALAVEIKGEERLIVVQEVERSYQKTLDINEVVGNIREAVTDEHDLQVYSVVLIKAGSIPKTSSGKIQRSACRVKFLEGTLDQWEARVKVTSKSGAAVSS.

This sequence belongs to the ATP-dependent AMP-binding enzyme family.

It carries out the reaction a medium-chain fatty acid + holo-[ACP] + ATP = a medium-chain fatty acyl-[ACP] + AMP + diphosphate. The catalysed reaction is a medium-chain fatty acid + ATP + H(+) = a medium-chain fatty acyl-AMP + diphosphate. The enzyme catalyses a medium-chain fatty acyl-AMP + holo-[ACP] = a medium-chain fatty acyl-[ACP] + AMP + H(+). Its function is as follows. Ligase involved in the biosynthesis of jamaicamides, which show sodium channel blocking activity and fish toxicity. Initiates jamaicamide biosynthesis by the activation of the starter unit, 5-hexenoic acid, followed by the loading of the activated 5-hexenoic acid onto the acyl carrier protein JamC. In vitro, can also use 5-hexynoic acid, heptanoic acid, butanoic acid, hexanoic acid and benzoic acid. The protein is Medium-chain-fatty-acid--[acyl-carrier-protein] ligase JamA of Moorena producens (strain JHB).